We begin with the raw amino-acid sequence, 618 residues long: Chaperone protein HscA homolog (618 aa).

The protein belongs to the heat shock protein 70 family.

Chaperone involved in the maturation of iron-sulfur cluster-containing proteins. Has a low intrinsic ATPase activity which is markedly stimulated by HscB. The sequence is that of Chaperone protein HscA homolog from Variovorax paradoxus (strain S110).